The sequence spans 194 residues: Peptidyl-tRNA hydrolase (194 aa).

Tyr-16 is a binding site for tRNA. His-21 serves as the catalytic Proton acceptor. TRNA contacts are provided by Phe-67, Asn-69, and Asn-115.

The protein belongs to the PTH family. In terms of assembly, monomer.

Its subcellular location is the cytoplasm. The catalysed reaction is an N-acyl-L-alpha-aminoacyl-tRNA + H2O = an N-acyl-L-amino acid + a tRNA + H(+). Hydrolyzes ribosome-free peptidyl-tRNAs (with 1 or more amino acids incorporated), which drop off the ribosome during protein synthesis, or as a result of ribosome stalling. In terms of biological role, catalyzes the release of premature peptidyl moieties from peptidyl-tRNA molecules trapped in stalled 50S ribosomal subunits, and thus maintains levels of free tRNAs and 50S ribosomes. The polypeptide is Peptidyl-tRNA hydrolase (Shigella flexneri).